A 147-amino-acid polypeptide reads, in one-letter code: Protein Turandot Z (147 aa).

The signal sequence occupies residues 1-23; sequence MYFAIRLSFVLAVLICLTGNGSA.

This sequence belongs to the Turandot family.

It localises to the secreted. In terms of biological role, a humoral factor that may play a role in stress tolerance. The polypeptide is Protein Turandot Z (Drosophila melanogaster (Fruit fly)).